The chain runs to 1578 residues: Neurexin-3 (1578 aa).

A signal peptide spans 1-27 (MSFTLHSVFFTLKVSSFLGSLVGLCLG). The Laminin G-like 1 domain occupies 28-202 (LEFMGLPNQW…SVQLEAEGPC (175 aa)). Residues 28–1503 (LEFMGLPNQW…EVIRESNSTT (1476 aa)) lie on the Extracellular side of the membrane. 2 N-linked (GlcNAc...) asparagine glycosylation sites follow: asparagine 58 and asparagine 105. An EGF-like 1 domain is found at 198 to 235 (AEGPCGERPCENGGICFLLDGHPTCDCSTTGYGGTLCS). Cystine bridges form between cysteine 202–cysteine 213, cysteine 207–cysteine 222, and cysteine 224–cysteine 234. 2 Laminin G-like domains span residues 260–444 (ENVA…VFKC) and 451–643 (DPIN…KSSC). Residues aspartate 308, leucine 325, and methionine 378 each coordinate Ca(2+). Cystine bridges form between cysteine 408/cysteine 444, cysteine 614/cysteine 643, cysteine 651/cysteine 662, cysteine 656/cysteine 671, and cysteine 673/cysteine 683. Residues 647–684 (SAKQCDSYPCKNNAVCKDGWNRFICDCTGTGYWGRTCE) enclose the EGF-like 2 domain. Laminin G-like domains follow at residues 689–861 (ILSY…IDYC) and 875–1050 (DPVT…DRGC). Residues aspartate 736 and leucine 753 each contribute to the Ca(2+) site. An N-linked (GlcNAc...) asparagine glycan is attached at asparagine 761. Ca(2+) is bound at residue arginine 811. Intrachain disulfides connect cysteine 1022-cysteine 1050, cysteine 1057-cysteine 1068, cysteine 1062-cysteine 1077, and cysteine 1079-cysteine 1089. Positions 1053-1090 (PSTTCQEDSCANQGVCMQQWEGFTCDCSMTSYSGNQCN) constitute an EGF-like 3 domain. The Laminin G-like 6 domain occupies 1094 to 1294 (ATYIFGKSGG…NPNIKINGSV (201 aa)). Aspartate 1146 and isoleucine 1163 together coordinate Ca(2+). The N-linked (GlcNAc...) asparagine glycan is linked to asparagine 1193. Ca(2+) contacts are provided by isoleucine 1245 and asparagine 1247. N-linked (GlcNAc...) asparagine glycosylation is found at asparagine 1291 and asparagine 1335. A disordered region spans residues 1328 to 1352 (ATTTTRKNRSTASIQPTSDDLVSSA). Residues 1337–1352 (STASIQPTSDDLVSSA) show a composition bias toward polar residues. A glycan (O-linked (Xyl...) (heparan sulfate) serine) is linked at serine 1351. N-linked (GlcNAc...) asparagine glycosylation is present at asparagine 1500. The chain crosses the membrane as a helical span at residues 1504-1524 (GMVVGIVAAAALCILILLYAM). Topologically, residues 1525–1578 (YKYRNRDEGSYQVDETRNYISNSAQSNGTLMKEKQASSKSGHKKQKNKDKEYYV) are cytoplasmic. The segment at 1546-1578 (NSAQSNGTLMKEKQASSKSGHKKQKNKDKEYYV) is disordered.

It belongs to the neurexin family. The laminin G-like domain 2 binds to NXPH1. Isoform 8/alpha-4B binds to alpha-dystroglycan. The cytoplasmic C-terminal region binds to CASK. Specific isoforms bind neuroligins NLGN1, NLGN2 and NLGN3. Interacts with CLSTN3. Post-translationally, O-glycosylated; contains heparan sulfate. Heparan sulfate attachment is required for synapse development by mediating interactions with neuroligins. As to expression, brain.

It localises to the presynaptic cell membrane. Neuronal cell surface protein that may be involved in cell recognition and cell adhesion. May mediate intracellular signaling. The sequence is that of Neurexin-3 (Nrxn3) from Rattus norvegicus (Rat).